A 674-amino-acid chain; its full sequence is tRNA 5-methylaminomethyl-2-thiouridine biosynthesis bifunctional protein MnmC (674 aa).

Residues 1-248 (MAASSLPSHN…KREMCFGRYA (248 aa)) form a tRNA (mnm(5)s(2)U34)-methyltransferase region. The interval 276–674 (IGAGLAGATV…AIRHWRSGKR (399 aa)) is FAD-dependent cmnm(5)s(2)U34 oxidoreductase.

In the N-terminal section; belongs to the methyltransferase superfamily. tRNA (mnm(5)s(2)U34)-methyltransferase family. It in the C-terminal section; belongs to the DAO family. It depends on FAD as a cofactor.

The protein localises to the cytoplasm. It carries out the reaction 5-aminomethyl-2-thiouridine(34) in tRNA + S-adenosyl-L-methionine = 5-methylaminomethyl-2-thiouridine(34) in tRNA + S-adenosyl-L-homocysteine + H(+). Its function is as follows. Catalyzes the last two steps in the biosynthesis of 5-methylaminomethyl-2-thiouridine (mnm(5)s(2)U) at the wobble position (U34) in tRNA. Catalyzes the FAD-dependent demodification of cmnm(5)s(2)U34 to nm(5)s(2)U34, followed by the transfer of a methyl group from S-adenosyl-L-methionine to nm(5)s(2)U34, to form mnm(5)s(2)U34. The protein is tRNA 5-methylaminomethyl-2-thiouridine biosynthesis bifunctional protein MnmC of Hydrogenovibrio crunogenus (strain DSM 25203 / XCL-2) (Thiomicrospira crunogena).